A 237-amino-acid chain; its full sequence is 3-oxoacyl-[acyl-carrier-protein] reductase (237 aa).

Methionine 1 is modified (N-acetylmethionine). NADP(+)-binding positions include 11 to 14 and 34 to 35; these read SRGI and RN. The residue at position 40 (lysine 40) is an N6-acetyllysine. NADP(+) contacts are provided by residues aspartate 56 and 83-85; that span reads AAG. The residue at position 96 (lysine 96) is an N6-acetyllysine. Serine 135 is a binding site for substrate. Residues tyrosine 148, lysine 152, and 181–183 each bind NADP(+); that span reads VHT. Tyrosine 148 (proton acceptor) is an active-site residue. An N6-acetyllysine modification is found at lysine 195.

It belongs to the short-chain dehydrogenases/reductases (SDR) family. As to quaternary structure, homotetramer (in vitro). Heterotetramer with HSD17B8; contains two molecules each of HSD17B8 and CBR4. Does not form homotetramers when HSD17B8 is coexpressed, only heterotetramers (in vitro). In terms of tissue distribution, detected in liver and kidney (at protein level). Displays the highest expression in neuronal and muscle tissues.

Its subcellular location is the mitochondrion matrix. The catalysed reaction is a (3R)-hydroxyacyl-[ACP] + NADP(+) = a 3-oxoacyl-[ACP] + NADPH + H(+). The enzyme catalyses a quinone + NADPH + H(+) = a quinol + NADP(+). Its pathway is lipid metabolism; fatty acid biosynthesis. Functionally, component of the heterotetramer complex KAR (3-ketoacyl-[acyl carrier protein] reductase or 3-ketoacyl-[ACP] reductase) that forms part of the mitochondrial fatty acid synthase (mtFAS). Beta-subunit of the KAR heterotetramer complex, responsible for the 3-ketoacyl-ACP reductase activity of the mtFAS, reduces 3-oxoacyl-[ACP] to (3R)-hydroxyacyl-[ACP] in a NADPH-dependent manner with no chain length preference, thereby participating in mitochondrial fatty acid biosynthesis. The homotetramer has NADPH-dependent quinone reductase activity (in vitro), hence could play a role in protection against cytotoxicity of exogenous quinones. As a heterotetramer, it can also reduce 9,10-phenanthrenequinone, 1,4-benzoquinone and various other o-quinones and p-quinones (in vitro). The chain is 3-oxoacyl-[acyl-carrier-protein] reductase (CBR4) from Homo sapiens (Human).